A 121-amino-acid chain; its full sequence is Small ribosomal subunit protein uS13 (121 aa).

The segment at 94-121 is disordered; it reads RGLPVRGQSTKNNARTRKGPKRTVGAKR. Over residues 107–121 the composition is skewed to basic residues; the sequence is ARTRKGPKRTVGAKR.

The protein belongs to the universal ribosomal protein uS13 family. As to quaternary structure, part of the 30S ribosomal subunit. Forms a loose heterodimer with protein S19. Forms two bridges to the 50S subunit in the 70S ribosome.

Functionally, located at the top of the head of the 30S subunit, it contacts several helices of the 16S rRNA. In the 70S ribosome it contacts the 23S rRNA (bridge B1a) and protein L5 of the 50S subunit (bridge B1b), connecting the 2 subunits; these bridges are implicated in subunit movement. Contacts the tRNAs in the A and P-sites. The sequence is that of Small ribosomal subunit protein uS13 from Natranaerobius thermophilus (strain ATCC BAA-1301 / DSM 18059 / JW/NM-WN-LF).